We begin with the raw amino-acid sequence, 81 residues long: ATP synthase subunit c, chloroplastic (81 aa).

Helical transmembrane passes span 3-23 and 57-77; these read PLIA…ASIG and LAFM…LLFA.

This sequence belongs to the ATPase C chain family. In terms of assembly, F-type ATPases have 2 components, F(1) - the catalytic core - and F(0) - the membrane proton channel. F(1) has five subunits: alpha(3), beta(3), gamma(1), delta(1), epsilon(1). F(0) has four main subunits: a(1), b(1), b'(1) and c(10-14). The alpha and beta chains form an alternating ring which encloses part of the gamma chain. F(1) is attached to F(0) by a central stalk formed by the gamma and epsilon chains, while a peripheral stalk is formed by the delta, b and b' chains.

Its subcellular location is the plastid. It localises to the chloroplast thylakoid membrane. Functionally, f(1)F(0) ATP synthase produces ATP from ADP in the presence of a proton or sodium gradient. F-type ATPases consist of two structural domains, F(1) containing the extramembraneous catalytic core and F(0) containing the membrane proton channel, linked together by a central stalk and a peripheral stalk. During catalysis, ATP synthesis in the catalytic domain of F(1) is coupled via a rotary mechanism of the central stalk subunits to proton translocation. Its function is as follows. Key component of the F(0) channel; it plays a direct role in translocation across the membrane. A homomeric c-ring of between 10-14 subunits forms the central stalk rotor element with the F(1) delta and epsilon subunits. The polypeptide is ATP synthase subunit c, chloroplastic (Agrostis stolonifera (Creeping bentgrass)).